The following is a 341-amino-acid chain: Arfaptin-2 (341 aa).

A disordered region spans residues 46–84; it reads NETSIVSGGYGGSGDGLIPTGSGRHPSHSTSPSGPGDEV. The segment covering 65-81 has biased composition (low complexity); the sequence is TGSGRHPSHSTSPSGPG. Position 72 is a phosphoserine (serine 72). Residues 121-321 form the AH domain; it reads TVDLELELQI…NQKQLEQTLQ (201 aa).

As to quaternary structure, forms homodimers or heterodimers with ARFIP1. Interacts with RAC1. Specifically binds to GTP-bound ARF1 and ARF6, but binds to RAC1.GTP and RAC1.GDP with similar affinities. Interacts with ARL1. Interacts (via N-terminus) with IKBKB and IKBKG; these interactions inhibit activation of NF-kappa-B.

Its subcellular location is the golgi apparatus. It localises to the trans-Golgi network membrane. Its function is as follows. Plays a role in constitutive metalloproteinase (MMP) secretion from the trans Golgi network. May have important functions during vesicle biogenesis at certain cargo subdomains, which could be predominantly utilized by secreted MMPs, such as MMP7 and MMP2. Also involved in autophagy by regulating the starvation-dependent trafficking of ATG9A vesicles which deliver the phosphatidylinositol 4-kinase beta (PI4KB) to the autophagosome initiation site. Involved in phagophore growth during mitophagy by regulating ATG9A trafficking to mitochondria. In addition, plays a role in NF-kappa-B inhibition by interacting with IKBKB and IKBKG. The sequence is that of Arfaptin-2 from Mus musculus (Mouse).